Here is a 335-residue protein sequence, read N- to C-terminus: NmrA-like family domain-containing oxidoreductase lnbB (335 aa).

Residues 14–18 (GTGNQ), 41–45 (RHPDS), 62–63 (DG), 83–85 (TNS), lysine 142, and 166–169 (YYEQ) each bind NADP(+).

It belongs to the NmrA-type oxidoreductase family.

Its pathway is secondary metabolite biosynthesis. NmrA-like family domain-containing oxidoreductase; part of the lnb gene cluster that mediates the biosynthesis of diastereomeric piperazines. Lna and lnb clusters encode sets of enzymes that produce overlapping sets of previously undescribed metabolites such as piperazinomycin-like metabolites or morpholine. The lna and lnb biosynthetic pathways appear to be part of a signaling network that controls the formation of sclerotia, a resilient overwintering structure. One primary function of the non-canonical nonribosomal peptide synthetases lnaA and lnbA consists in the reduction of L-tyrosine. The presence in the clusters of tailoring enzymes such as the oxidoreductases lnaB, lnbB, lnaE or lnbE, as well as of the cytochrome P450 monooxygenases lnaC, lnaD, or lnbC, might explain formation of various diastereomeric piperazines. The chain is NmrA-like family domain-containing oxidoreductase lnbB from Aspergillus flavus (strain ATCC 200026 / FGSC A1120 / IAM 13836 / NRRL 3357 / JCM 12722 / SRRC 167).